The primary structure comprises 69 residues: MGKVYKKVELVGTSEEGLEAAIQAALARARKTLRHLDWFEVKEIRGTIGEAGVKEYQVVLEVGFRLEET.

3 to 5 (KVY) is an FMN binding site. CoA contacts are provided by residues Lys-6, Arg-28, and 32–34 (TLR). The FMN site is built by Asp-37, Trp-38, Arg-45, Gln-57, and Arg-65. CoA is bound at residue 65-67 (RLE).

It belongs to the dodecin family. In terms of assembly, homododecamer; four homotrimers assemble to form a dodecameric hollow sphere with an outer diameter of about 60 Angstroms. Flavin dimers are bound between subunits with a stoichiometry of 6 flavin dimers per dodecamer. Besides, trimeric coenzyme A molecules can be bound between subunits. A dodecamer can bind simultaneously 12 flavin and 12 coenzyme A molecules.

Functionally, may function as storage protein that sequesters various flavins and other cofactors, thereby protecting the cell against undesirable reactions mediated by the free cofactors. Binds and sequesters FMN, FAD, lumiflavin and lumichrome, and can also bind coenzyme A. This Thermus thermophilus (strain ATCC 27634 / DSM 579 / HB8) protein is Dodecin.